A 293-amino-acid chain; its full sequence is Ribosomal protein L11 methyltransferase (293 aa).

4 residues coordinate S-adenosyl-L-methionine: T145, G166, D188, and N230.

It belongs to the methyltransferase superfamily. PrmA family.

It localises to the cytoplasm. The enzyme catalyses L-lysyl-[protein] + 3 S-adenosyl-L-methionine = N(6),N(6),N(6)-trimethyl-L-lysyl-[protein] + 3 S-adenosyl-L-homocysteine + 3 H(+). Functionally, methylates ribosomal protein L11. The protein is Ribosomal protein L11 methyltransferase of Escherichia coli (strain 55989 / EAEC).